The chain runs to 323 residues: Sphingolipid delta(4)-desaturase DES1 (323 aa).

The N-myristoyl glycine moiety is linked to residue glycine 2. 2 helical membrane-spanning segments follow: residues 41 to 61 (SNLI…FYLV) and 68 to 88 (WVLF…TLAI). The Histidine box-1 signature appears at 89–93 (HEVSH). A helical membrane pass occupies residues 102–122 (AMWNRWFGIFANLPIGVPYSV). Residues 128 to 132 (HMDHH) carry the Histidine box-2 motif. The next 3 membrane-spanning stretches (helical) occupy residues 152 to 172 (FFCT…FYAF), 184 to 204 (YLEI…YYVL), and 209 to 229 (LVYM…SGHF). The Histidine box-3 signature appears at 259 to 263 (HNEHH). Serine 307 carries the phosphoserine modification.

Belongs to the fatty acid desaturase type 1 family. DEGS subfamily. In terms of assembly, interacts with RLBP1; the interaction increases synthesis of chromophore-precursors by DEGS1. In terms of processing, myristoylation can target the enzyme to the mitochondria leading to an increase in ceramide levels.

The protein resides in the mitochondrion membrane. The protein localises to the endoplasmic reticulum membrane. It carries out the reaction an N-acylsphinganine + 2 Fe(II)-[cytochrome b5] + O2 + 2 H(+) = an N-acylsphing-4-enine + 2 Fe(III)-[cytochrome b5] + 2 H2O. The enzyme catalyses all-trans-retinol = 11-cis-retinol. It catalyses the reaction all-trans-retinol = 9-cis-retinol. The catalysed reaction is all-trans-retinol = 13-cis-retinol. It carries out the reaction 11-cis-retinol = 13-cis-retinol. The enzyme catalyses 11-cis-retinol = 9-cis-retinol. Its function is as follows. Has sphingolipid-delta-4-desaturase activity. Converts D-erythro-sphinganine to D-erythro-sphingosine (E-sphing-4-enine). Catalyzes the equilibrium isomerization of retinols. In Bos taurus (Bovine), this protein is Sphingolipid delta(4)-desaturase DES1 (DEGS1).